We begin with the raw amino-acid sequence, 433 residues long: Enolase (433 aa).

Q167 contributes to the (2R)-2-phosphoglycerate binding site. The Proton donor role is filled by E209. Positions 246, 291, and 318 each coordinate Mg(2+). Positions 343, 372, 373, and 394 each coordinate (2R)-2-phosphoglycerate. K343 acts as the Proton acceptor in catalysis.

The protein belongs to the enolase family. Component of the RNA degradosome, a multiprotein complex involved in RNA processing and mRNA degradation. It depends on Mg(2+) as a cofactor.

The protein localises to the cytoplasm. Its subcellular location is the secreted. The protein resides in the cell surface. The catalysed reaction is (2R)-2-phosphoglycerate = phosphoenolpyruvate + H2O. Its pathway is carbohydrate degradation; glycolysis; pyruvate from D-glyceraldehyde 3-phosphate: step 4/5. Catalyzes the reversible conversion of 2-phosphoglycerate (2-PG) into phosphoenolpyruvate (PEP). It is essential for the degradation of carbohydrates via glycolysis. The sequence is that of Enolase from Edwardsiella ictaluri (strain 93-146).